Here is a 100-residue protein sequence, read N- to C-terminus: ATP phosphoribosyltransferase (100 aa).

Belongs to the ATP phosphoribosyltransferase family. Long subfamily. As to quaternary structure, equilibrium between an active dimeric form, an inactive hexameric form and higher aggregates. Interconversion between the various forms is largely reversible and is influenced by the natural substrates and inhibitors of the enzyme. Mg(2+) serves as cofactor.

Its subcellular location is the cytoplasm. It catalyses the reaction 1-(5-phospho-beta-D-ribosyl)-ATP + diphosphate = 5-phospho-alpha-D-ribose 1-diphosphate + ATP. It functions in the pathway amino-acid biosynthesis; L-histidine biosynthesis; L-histidine from 5-phospho-alpha-D-ribose 1-diphosphate: step 1/9. Its activity is regulated as follows. Feedback inhibited by histidine. In terms of biological role, catalyzes the condensation of ATP and 5-phosphoribose 1-diphosphate to form N'-(5'-phosphoribosyl)-ATP (PR-ATP). Has a crucial role in the pathway because the rate of histidine biosynthesis seems to be controlled primarily by regulation of HisG enzymatic activity. In Klebsiella pneumoniae, this protein is ATP phosphoribosyltransferase (hisG).